The following is a 439-amino-acid chain: Proline--tRNA ligase (439 aa).

It belongs to the class-II aminoacyl-tRNA synthetase family. ProS type 2 subfamily. In terms of assembly, homodimer.

The protein localises to the cytoplasm. It catalyses the reaction tRNA(Pro) + L-proline + ATP = L-prolyl-tRNA(Pro) + AMP + diphosphate. In terms of biological role, catalyzes the attachment of proline to tRNA(Pro) in a two-step reaction: proline is first activated by ATP to form Pro-AMP and then transferred to the acceptor end of tRNA(Pro). This Rhodopseudomonas palustris (strain BisA53) protein is Proline--tRNA ligase.